Consider the following 174-residue polypeptide: Small ribosomal subunit protein uS7c (174 aa).

Belongs to the universal ribosomal protein uS7 family. Part of the 30S ribosomal subunit.

It localises to the plastid. The protein resides in the chloroplast. In terms of biological role, one of the primary rRNA binding proteins, it binds directly to 16S rRNA where it nucleates assembly of the head domain of the 30S subunit. This Stigeoclonium helveticum (Green alga) protein is Small ribosomal subunit protein uS7c (rps7).